The chain runs to 197 residues: Holliday junction branch migration complex subunit RuvA (197 aa).

The tract at residues 1–64 (MIGRISGLLL…EDAHLLFGFA (64 aa)) is domain I. The interval 65–142 (TEGERQAFRQ…DLGVSAIPGA (78 aa)) is domain II. Positions 143–153 (AGARRPSTMGS) are flexible linker. Positions 153–197 (SDVLNALLSLGYNDREANWAVSQLSVDLSVSDGIRQALKFLSKEK) are domain III.

It belongs to the RuvA family. Homotetramer. Forms an RuvA(8)-RuvB(12)-Holliday junction (HJ) complex. HJ DNA is sandwiched between 2 RuvA tetramers; dsDNA enters through RuvA and exits via RuvB. An RuvB hexamer assembles on each DNA strand where it exits the tetramer. Each RuvB hexamer is contacted by two RuvA subunits (via domain III) on 2 adjacent RuvB subunits; this complex drives branch migration. In the full resolvosome a probable DNA-RuvA(4)-RuvB(12)-RuvC(2) complex forms which resolves the HJ.

Its subcellular location is the cytoplasm. Its function is as follows. The RuvA-RuvB-RuvC complex processes Holliday junction (HJ) DNA during genetic recombination and DNA repair, while the RuvA-RuvB complex plays an important role in the rescue of blocked DNA replication forks via replication fork reversal (RFR). RuvA specifically binds to HJ cruciform DNA, conferring on it an open structure. The RuvB hexamer acts as an ATP-dependent pump, pulling dsDNA into and through the RuvAB complex. HJ branch migration allows RuvC to scan DNA until it finds its consensus sequence, where it cleaves and resolves the cruciform DNA. The chain is Holliday junction branch migration complex subunit RuvA from Nitrosospira multiformis (strain ATCC 25196 / NCIMB 11849 / C 71).